The chain runs to 153 residues: UPF0756 membrane protein LSEI_1366 (153 aa).

The next 4 membrane-spanning stretches (helical) occupy residues 4–24, 52–72, 85–105, and 115–135; these read WLFLLGILAIAIVGKNKSLII, WGVTVISAAIMVPIATGEIGF, WIAIGCGVLVAVLSAKGVGLL, and LVFGTIIGVVFLKGIAAGPVI.

This sequence belongs to the UPF0756 family.

Its subcellular location is the cell membrane. The protein is UPF0756 membrane protein LSEI_1366 of Lacticaseibacillus paracasei (strain ATCC 334 / BCRC 17002 / CCUG 31169 / CIP 107868 / KCTC 3260 / NRRL B-441) (Lactobacillus paracasei).